The following is a 397-amino-acid chain: Chorismate synthase (397 aa).

Residues Arg40 and Arg46 each coordinate NADP(+). FMN contacts are provided by residues 129–131 (RSS), 257–258 (QA), Gly302, 317–321 (KPISS), and Arg343.

Belongs to the chorismate synthase family. In terms of assembly, homotetramer. FMNH2 serves as cofactor.

The catalysed reaction is 5-O-(1-carboxyvinyl)-3-phosphoshikimate = chorismate + phosphate. It functions in the pathway metabolic intermediate biosynthesis; chorismate biosynthesis; chorismate from D-erythrose 4-phosphate and phosphoenolpyruvate: step 7/7. Catalyzes the anti-1,4-elimination of the C-3 phosphate and the C-6 proR hydrogen from 5-enolpyruvylshikimate-3-phosphate (EPSP) to yield chorismate, which is the branch point compound that serves as the starting substrate for the three terminal pathways of aromatic amino acid biosynthesis. This reaction introduces a second double bond into the aromatic ring system. This chain is Chorismate synthase, found in Chlorobium phaeovibrioides (strain DSM 265 / 1930) (Prosthecochloris vibrioformis (strain DSM 265)).